The following is a 228-amino-acid chain: Putative elongation factor Tu-like protein (228 aa).

The tr-type G domain maps to 6–212; the sequence is KPHINVGTIG…LPIREKDNPF (207 aa). The segment at 15–22 is G1; the sequence is GHVDHGKT. Residues 59-63 are G2; it reads GITIS. The G3 stretch occupies residues 80-83; that stretch reads DCPG. Positions 135–138 are G4; that stretch reads NKCD. A G5 region spans residues 173-175; that stretch reads SAV.

Belongs to the TRAFAC class translation factor GTPase superfamily. Classic translation factor GTPase family. EF-Tu/EF-1A subfamily.

The chain is Putative elongation factor Tu-like protein from Ehrlichia ruminantium (strain Welgevonden).